A 225-amino-acid chain; its full sequence is Uracil-DNA glycosylase (225 aa).

Residue aspartate 65 is the Proton acceptor of the active site.

This sequence belongs to the uracil-DNA glycosylase (UDG) superfamily. UNG family.

It is found in the cytoplasm. The catalysed reaction is Hydrolyzes single-stranded DNA or mismatched double-stranded DNA and polynucleotides, releasing free uracil.. Its function is as follows. Excises uracil residues from the DNA which can arise as a result of misincorporation of dUMP residues by DNA polymerase or due to deamination of cytosine. The sequence is that of Uracil-DNA glycosylase from Bacillus thuringiensis (strain Al Hakam).